Consider the following 310-residue polypeptide: Ribosomal protein uL3 glutamine methyltransferase (310 aa).

The protein belongs to the protein N5-glutamine methyltransferase family. PrmB subfamily.

It catalyses the reaction L-glutaminyl-[ribosomal protein uL3] + S-adenosyl-L-methionine = N(5)-methyl-L-glutaminyl-[ribosomal protein uL3] + S-adenosyl-L-homocysteine + H(+). Its function is as follows. Specifically methylates large ribosomal subunit protein uL3 on 'Gln-150'. This Shigella dysenteriae serotype 1 (strain Sd197) protein is Ribosomal protein uL3 glutamine methyltransferase.